Here is a 228-residue protein sequence, read N- to C-terminus: Ribose-5-phosphate isomerase A (228 aa).

Substrate is bound by residues 31–34 (TGST), 85–88 (DGAD), and 97–100 (KGGG). Glutamate 106 (proton acceptor) is an active-site residue. Lysine 124 contributes to the substrate binding site.

It belongs to the ribose 5-phosphate isomerase family. In terms of assembly, homodimer.

It carries out the reaction aldehydo-D-ribose 5-phosphate = D-ribulose 5-phosphate. The protein operates within carbohydrate degradation; pentose phosphate pathway; D-ribose 5-phosphate from D-ribulose 5-phosphate (non-oxidative stage): step 1/1. Catalyzes the reversible conversion of ribose-5-phosphate to ribulose 5-phosphate. The protein is Ribose-5-phosphate isomerase A of Haloarcula marismortui (strain ATCC 43049 / DSM 3752 / JCM 8966 / VKM B-1809) (Halobacterium marismortui).